A 283-amino-acid polypeptide reads, in one-letter code: MIKKSKTAEVIISALPYIRKFRDKIFVIKYGGAAQTDDNLKLNFARDIVLLHMVGIKIIIIHGGGKKINQTLDLLGVKSEFADGLRITDKKSIEIVEMVLSGAVNKQITALLNQNGAKAIGICGKDANLLEAEVLSGGKYGFVGEIKNVNVNFLKDLLTNDYIPVIAPIAANEKNETFNINADLCASKIASALKADKIVFLSDIDGVLDKNGELISKLNPNLIENLKKDGTISGGMIPKIDACVECIENGVKNAHIINGKIPHSILLELFTDNGIGSMVKEVF.

Substrate is bound by residues 64-65 (GG), Arg-86, and Asn-179.

This sequence belongs to the acetylglutamate kinase family. ArgB subfamily.

It localises to the cytoplasm. The catalysed reaction is N-acetyl-L-glutamate + ATP = N-acetyl-L-glutamyl 5-phosphate + ADP. Its pathway is amino-acid biosynthesis; L-arginine biosynthesis; N(2)-acetyl-L-ornithine from L-glutamate: step 2/4. Functionally, catalyzes the ATP-dependent phosphorylation of N-acetyl-L-glutamate. This is Acetylglutamate kinase from Campylobacter hominis (strain ATCC BAA-381 / DSM 21671 / CCUG 45161 / LMG 19568 / NCTC 13146 / CH001A).